Here is a 538-residue protein sequence, read N- to C-terminus: Nectin-2 (538 aa).

A signal peptide spans Met1–Ala31. One can recognise an Ig-like V-type domain in the interval Gln32–Leu156. Residues Gln32 to Gly360 are Extracellular-facing. Cystine bridges form between Cys54–Cys140, Cys183–Cys238, and Cys283–Cys329. N-linked (GlcNAc...) asparagine glycosylation occurs at Asn137. 2 Ig-like C2-type domains span residues Pro162 to Ser256 and Pro261 to Phe345. An N-linked (GlcNAc...) asparagine glycan is attached at Asn324. Residues Ile361 to Ile381 traverse the membrane as a helical segment. Residues Cys382–Val538 are Cytoplasmic-facing. The disordered stretch occupies residues Thr390–Lys414. Thr410 is modified (phosphothreonine). Ser433, Gly465, and Gly470 each carry phosphoserine. The segment at Glu462–Asp489 is disordered.

This sequence belongs to the nectin family. In terms of assembly, can form trans-heterodimers with NECTIN3. Interacts with CD226 or with PVRIG; these interactions are competitive and have a differential functional outcome on T-cell activation, either positive or negative, respectively. Binds with low affinity to TIGIT. As to quaternary structure, (Microbial infection) Interacts with herpes simplex virus 1 (HHV-1) mutant Rid1, herpes simplex virus 1 (HHV-2) and pseudorabies virus (PRV) envelope glycoprotein D. In terms of tissue distribution, ubiquitous.

The protein localises to the cell membrane. Modulator of T-cell signaling. Can be either a costimulator of T-cell function, or a coinhibitor, depending on the receptor it binds to. Upon binding to CD226, stimulates T-cell proliferation and cytokine production, including that of IL2, IL5, IL10, IL13, and IFNG. Upon interaction with PVRIG, inhibits T-cell proliferation. These interactions are competitive. Probable cell adhesion protein. Functionally, (Microbial infection) Acts as a receptor for herpes simplex virus 1 (HHV-1) mutant Rid1, herpes simplex virus 1 (HHV-2) and pseudorabies virus (PRV). This chain is Nectin-2, found in Homo sapiens (Human).